Here is a 290-residue protein sequence, read N- to C-terminus: Small ribosomal subunit protein uS2 (290 aa).

This sequence belongs to the universal ribosomal protein uS2 family. As to quaternary structure, component of the small ribosomal subunit. Mature ribosomes consist of a small (40S) and a large (60S) subunit. The 40S subunit contains about 33 different proteins and 1 molecule of RNA (18S). The 60S subunit contains about 49 different proteins and 3 molecules of RNA (28S, 5.8S and 5S). Interacts with ribosomal protein S21.

The protein localises to the cytoplasm. In terms of biological role, required for the assembly and/or stability of the 40S ribosomal subunit. Required for the processing of the 20S rRNA-precursor to mature 18S rRNA in a late step of the maturation of 40S ribosomal subunits. The chain is Small ribosomal subunit protein uS2 from Culex quinquefasciatus (Southern house mosquito).